The sequence spans 304 residues: Non-specific ribonucleoside hydrolase RihC (304 aa).

The active site involves His-233.

Belongs to the IUNH family. RihC subfamily.

Functionally, hydrolyzes both purine and pyrimidine ribonucleosides with a broad-substrate specificity. The protein is Non-specific ribonucleoside hydrolase RihC of Escherichia coli (strain SMS-3-5 / SECEC).